The primary structure comprises 203 residues: Guanylate kinase (203 aa).

The 179-residue stretch at 3-181 (GTLYIVAAPS…AVSEMCAIFT (179 aa)) folds into the Guanylate kinase-like domain. Residue 10–17 (APSGAGKS) participates in ATP binding.

The protein belongs to the guanylate kinase family.

It localises to the cytoplasm. The enzyme catalyses GMP + ATP = GDP + ADP. Essential for recycling GMP and indirectly, cGMP. This chain is Guanylate kinase, found in Xanthomonas oryzae pv. oryzae (strain MAFF 311018).